The sequence spans 64 residues: uncharacterized protein (64 aa).

A helical membrane pass occupies residues 30–52 (FYAIFEMLFWPLVSLISVGLLGE).

The protein resides in the membrane. This is an uncharacterized protein from Archaeoglobus fulgidus (strain ATCC 49558 / DSM 4304 / JCM 9628 / NBRC 100126 / VC-16).